Reading from the N-terminus, the 447-residue chain is MGKEKTHINIVVIGHVDSGKSTTTGHLIYKLGGIDKRVIERFEKEAAEMNKRSFKYAWVLDKLKAERERGITIDIALWKFETTKYYCTVIDAPGHRDFIKNMITGTSQADCAVLIIDSTTGGFEAGISKDGQTREHALLAFTLGVKQMICCCNKMDATTPKYSKARYDEIVKEVSSYLKKVGYNPDKIPFVPISGFEGDNMIERSTNLDWYKGPTLLEALDQINEPKRPSDKPLRLPLQDVYKIGGIGTVPVGRVETGVLKPGMVVTFGPSGLTTEVKSVEMHHEALQEALPGDNVGFNVKNVAVKDLKRGYVASNSKDDPAKEAASFTSQVIIMNHPGQIGNGYAPVLDCHTSHIAVKFAELVTKIDRRSGKELEKEPKFLKNGDAGMVKMIPTKPMVVETFSEYPPLGRFAVRDMRQTVAVGVIKNVEKKDPTGAKVTKAAAKKK.

One can recognise a tr-type G domain in the interval 5 to 230 (KTHINIVVIG…DQINEPKRPS (226 aa)). Positions 14 to 21 (GHVDSGKS) are G1. 14–21 (GHVDSGKS) provides a ligand contact to GTP. Lysine 55 carries the N6,N6-dimethyllysine modification. The G2 stretch occupies residues 70 to 74 (GITID). Position 79 is an N6,N6,N6-trimethyllysine (lysine 79). The segment at 91–94 (DAPG) is G3. GTP contacts are provided by residues 91–95 (DAPGH) and 153–156 (NKMD). The G4 stretch occupies residues 153–156 (NKMD). Lysine 187 bears the N6,N6,N6-trimethyllysine mark. Residues 194–196 (SGF) form a G5 region. Residue lysine 261 is modified to N6-methyllysine. 5-glutamyl glycerylphosphorylethanolamine is present on glutamate 289. N6,N6,N6-trimethyllysine is present on lysine 306. At glutamate 362 the chain carries 5-glutamyl glycerylphosphorylethanolamine. Position 396 is an N6,N6,N6-trimethyllysine (lysine 396).

Belongs to the TRAFAC class translation factor GTPase superfamily. Classic translation factor GTPase family. EF-Tu/EF-1A subfamily.

It is found in the cytoplasm. Its function is as follows. This protein promotes the GTP-dependent binding of aminoacyl-tRNA to the A-site of ribosomes during protein biosynthesis. This chain is Elongation factor 1-alpha (REFA1), found in Oryza sativa subsp. japonica (Rice).